Here is a 37-residue protein sequence, read N- to C-terminus: Large ribosomal subunit protein bL36A (37 aa).

It belongs to the bacterial ribosomal protein bL36 family.

The chain is Large ribosomal subunit protein bL36A from Neisseria meningitidis serogroup C (strain 053442).